We begin with the raw amino-acid sequence, 493 residues long: Succinate-semialdehyde dehydrogenase [NADP(+)] 2 (493 aa).

Position 242-247 (242-247 (GSTNVG)) interacts with NAD(+). E264 is a catalytic residue. The Nucleophile role is filled by C298.

Belongs to the aldehyde dehydrogenase family. In terms of assembly, homotetramer.

The protein resides in the cytoplasm. The catalysed reaction is succinate semialdehyde + NAD(+) + H2O = succinate + NADH + 2 H(+). The enzyme catalyses succinate semialdehyde + NADP(+) + H2O = succinate + NADPH + 2 H(+). It participates in amino-acid degradation; 4-aminobutanoate degradation. Catalyzes the oxidation of succinate semialdehyde to succinate. Can utilize both NAD(+) or NADP(+) as a coenzyme. Functions in the GABA shunt, which allows to bypass 2 reactions in the TCA cycle by removing alpha-ketoglutarate from the cycle and feeding succinate and NADH back into the cycle. In Schizosaccharomyces pombe (strain 972 / ATCC 24843) (Fission yeast), this protein is Succinate-semialdehyde dehydrogenase [NADP(+)] 2 (ssd2).